Here is a 377-residue protein sequence, read N- to C-terminus: S-adenosylmethionine decarboxylase proenzyme 2 (377 aa).

Residues glutamate 24 and glutamate 27 contribute to the active site. Catalysis depends on serine 84, which acts as the Schiff-base intermediate with substrate; via pyruvic acid. Serine 84 bears the Pyruvic acid (Ser); by autocatalysis mark. The active-site Proton donor; for catalytic activity is cysteine 98. Residues serine 246 and histidine 259 each act as proton acceptor; for processing activity in the active site.

The protein belongs to the eukaryotic AdoMetDC family. Pyruvate is required as a cofactor. Post-translationally, is synthesized initially as an inactive proenzyme. Formation of the active enzyme involves a self-maturation process in which the active site pyruvoyl group is generated from an internal serine residue via an autocatalytic post-translational modification. Two non-identical subunits are generated from the proenzyme in this reaction, and the pyruvate is formed at the N-terminus of the alpha chain, which is derived from the carboxyl end of the proenzyme. The post-translation cleavage follows an unusual pathway, termed non-hydrolytic serinolysis, in which the side chain hydroxyl group of the serine supplies its oxygen atom to form the C-terminus of the beta chain, while the remainder of the serine residue undergoes an oxidative deamination to produce ammonia and the pyruvoyl group blocking the N-terminus of the alpha chain.

It catalyses the reaction S-adenosyl-L-methionine + H(+) = S-adenosyl 3-(methylsulfanyl)propylamine + CO2. It participates in amine and polyamine biosynthesis; S-adenosylmethioninamine biosynthesis; S-adenosylmethioninamine from S-adenosyl-L-methionine: step 1/1. The chain is S-adenosylmethionine decarboxylase proenzyme 2 (SAMDC2) from Dianthus caryophyllus (Carnation).